We begin with the raw amino-acid sequence, 159 residues long: SsrA-binding protein (159 aa).

A compositionally biased stretch (basic and acidic residues) spans 131-148; that stretch reads YDKRQTLREKQDRREAER. The interval 131–159 is disordered; that stretch reads YDKRQTLREKQDRREAERTISAIKRKQRA.

It belongs to the SmpB family.

The protein localises to the cytoplasm. Required for rescue of stalled ribosomes mediated by trans-translation. Binds to transfer-messenger RNA (tmRNA), required for stable association of tmRNA with ribosomes. tmRNA and SmpB together mimic tRNA shape, replacing the anticodon stem-loop with SmpB. tmRNA is encoded by the ssrA gene; the 2 termini fold to resemble tRNA(Ala) and it encodes a 'tag peptide', a short internal open reading frame. During trans-translation Ala-aminoacylated tmRNA acts like a tRNA, entering the A-site of stalled ribosomes, displacing the stalled mRNA. The ribosome then switches to translate the ORF on the tmRNA; the nascent peptide is terminated with the 'tag peptide' encoded by the tmRNA and targeted for degradation. The ribosome is freed to recommence translation, which seems to be the essential function of trans-translation. The sequence is that of SsrA-binding protein from Streptomyces coelicolor (strain ATCC BAA-471 / A3(2) / M145).